A 332-amino-acid chain; its full sequence is tRNA dimethylallyltransferase (332 aa).

ATP is bound at residue 14-21; that stretch reads GPTASGKT. 16-21 serves as a coordination point for substrate; sequence TASGKT. Positions 39–42 are interaction with substrate tRNA; that stretch reads DSMQ. The disordered stretch occupies residues 313-332; sequence KRSSKHDCKPQHPRSSTREL. The span at 317-332 shows a compositional bias: basic and acidic residues; the sequence is KHDCKPQHPRSSTREL.

It belongs to the IPP transferase family. As to quaternary structure, monomer. The cofactor is Mg(2+).

It catalyses the reaction adenosine(37) in tRNA + dimethylallyl diphosphate = N(6)-dimethylallyladenosine(37) in tRNA + diphosphate. Its function is as follows. Catalyzes the transfer of a dimethylallyl group onto the adenine at position 37 in tRNAs that read codons beginning with uridine, leading to the formation of N6-(dimethylallyl)adenosine (i(6)A). The polypeptide is tRNA dimethylallyltransferase (Staphylococcus haemolyticus (strain JCSC1435)).